A 321-amino-acid polypeptide reads, in one-letter code: Glucokinase (321 aa).

ATP is bound at residue 8-13 (GDVGGT).

Belongs to the bacterial glucokinase family.

The protein localises to the cytoplasm. The enzyme catalyses D-glucose + ATP = D-glucose 6-phosphate + ADP + H(+). In Salmonella paratyphi B (strain ATCC BAA-1250 / SPB7), this protein is Glucokinase.